Consider the following 459-residue polypeptide: uncharacterized protein (459 aa).

12 helical membrane passes run 25-45, 52-72, 95-115, 123-143, 167-187, 192-212, 249-269, 279-299, 310-330, 332-352, 389-409, and 420-440; these read SYGF…IYLL, AGIP…FAAI, PYLL…FLSP, LIYA…VNIP, IGSL…LVKF, VGYP…FYIC, VLMT…LVYF, LMAY…VFLP, TAMI…MLPS, VYVF…PNGI, SLSG…PNAV, and ALLL…IGFL.

The protein belongs to the sodium:galactoside symporter (TC 2.A.2) family.

It is found in the cell membrane. This is an uncharacterized protein from Bacillus subtilis (strain 168).